We begin with the raw amino-acid sequence, 93 residues long: Putative septation protein SpoVG (93 aa).

This sequence belongs to the SpoVG family.

Its function is as follows. Could be involved in septation. The polypeptide is Putative septation protein SpoVG (Fusobacterium nucleatum subsp. nucleatum (strain ATCC 25586 / DSM 15643 / BCRC 10681 / CIP 101130 / JCM 8532 / KCTC 2640 / LMG 13131 / VPI 4355)).